The chain runs to 170 residues: Microfibrillar-associated protein 5 (170 aa).

Residues 1 to 20 (MTFFGPKVLLLLTALIMSSG) form the signal peptide. Residues 30–32 (RGD) carry the Cell attachment site motif. An N-linked (GlcNAc...) asparagine glycan is attached at N76.

It belongs to the MFAP family. Interacts with TGFB2. Interacts with BMP2. Interacts with FBN1 (via N-terminal domain) and FBN2. Post-translationally, forms intermolecular disulfide bonds either with other MAGP-2 molecules or with other components of the microfibrils. In terms of tissue distribution, associated with fibrillin-containing microfibrils of the developing nuchal ligament.

Its subcellular location is the secreted. It is found in the extracellular space. The protein resides in the extracellular matrix. Functionally, may play a role in hematopoiesis. In the cardiovascular system, could regulate growth factors or participate in cell signaling in maintaining large vessel integrity. Component of the elastin-associated microfibrils. This chain is Microfibrillar-associated protein 5 (MFAP5), found in Bos taurus (Bovine).